Reading from the N-terminus, the 398-residue chain is T-box transcription factor TBX1 (398 aa).

Positions 23–72 (AAGGFPGAASPGADPYGPREPPPPPPRYDPCAAAAPGAPGPPPPPHAYPF) are disordered. Positions 29 to 38 (GAASPGADPY) are enriched in low complexity. 2 stretches are compositionally biased toward pro residues: residues 40-50 (PREPPPPPPRY) and 60-69 (APGPPPPPHA). The T-box DNA-binding region spans 119 to 297 (LWDEFNQLGT…SNPFAKGFRD (179 aa)).

Binds DNA as a dimer. Interacts with DSCR6. Interacts with NKX2-5.

The protein localises to the nucleus. Its function is as follows. Transcription factor that plays a key role in cardiovascular development by promoting pharyngeal arch segmentation during embryonic development. Also involved in craniofacial muscle development. Together with NKX2-5, acts as a regulator of asymmetric cardiac morphogenesis by promoting expression of PITX2. Acts upstream of TBX1 for the formation of the thymus and parathyroid glands from the third pharyngeal pouch. Required for hair follicle stem cell self-renewal. Binds to the palindromic T site 5'-TTCACACCTAGGTGTGAA-3' DNA sequence. The sequence is that of T-box transcription factor TBX1 from Homo sapiens (Human).